A 107-amino-acid polypeptide reads, in one-letter code: U1-lycotoxin-Ls1m (107 aa).

The signal sequence occupies residues 1–20; the sequence is MMKVLVVVALLVTLISYSSS. Positions 21 to 41 are excised as a propeptide; sequence EGIDDLEADELLSLMANEQTR. Cystine bridges form between Cys-44-Cys-59, Cys-51-Cys-68, Cys-58-Cys-86, and Cys-70-Cys-84.

Belongs to the neurotoxin 19 (CSTX) family. 04 (U1-Lctx) subfamily. In terms of tissue distribution, expressed by the venom gland.

It localises to the secreted. The protein is U1-lycotoxin-Ls1m of Lycosa singoriensis (Wolf spider).